The sequence spans 576 residues: Plant intracellular Ras-group-related LRR protein 4 (576 aa).

Residues 130 to 151 (AAPAAATTTTSTAAAGSSSSSA) show a composition bias toward low complexity. Positions 130–181 (AAPAAATTTTSTAAAGSSSSSAVGNAERHASSGTNGFTASRVAGTSTSTGRV) are disordered. Polar residues predominate over residues 160–180 (SSGTNGFTASRVAGTSTSTGR). LRR repeat units lie at residues 272–295 (LTGL…IGKL), 296–318 (FSLA…IGDL), 320–341 (SLIY…IGRL), 342–364 (LNLE…IGSL), 366–387 (RLKK…IGHC), 389–410 (SLVE…VGKL), 411–433 (EPLE…MASL), 434–456 (TKLK…FCFA), 458–481 (SLIK…IGNL), 482–503 (EMLE…SFGN), and 505–527 (KHLR…IALK). Residues 528-535 (GAQAVVQY) carry the GVYW; degenerate motif.

The protein belongs to the SHOC2 family. As to expression, widely expressed.

Functionally, leucine-rich repeat protein that likely mediates protein interactions, possibly in the context of signal transduction. The protein is Plant intracellular Ras-group-related LRR protein 4 (IRL4) of Oryza sativa subsp. japonica (Rice).